The following is a 147-amino-acid chain: Small ribosomal subunit protein bS16m (147 aa).

This sequence belongs to the bacterial ribosomal protein bS16 family. As to quaternary structure, component of the mitochondrial ribosome small subunit (28S) which comprises a 12S rRNA and about 30 distinct proteins.

It is found in the mitochondrion. In Caenorhabditis elegans, this protein is Small ribosomal subunit protein bS16m (mrps-16).